Reading from the N-terminus, the 78-residue chain is MKKQNLIDMEGVVTESLPNAMFRVCLDNGCEVLTHISGKIRRNYIRILPGDRVKVELTPYDLTKGRITYRLRAKSSNS.

Residues 1–72 (MKKQNLIDME…TKGRITYRLR (72 aa)) enclose the S1-like domain.

This sequence belongs to the IF-1 family. In terms of assembly, component of the 30S ribosomal translation pre-initiation complex which assembles on the 30S ribosome in the order IF-2 and IF-3, IF-1 and N-formylmethionyl-tRNA(fMet); mRNA recruitment can occur at any time during PIC assembly.

The protein localises to the plastid. It localises to the chloroplast. Functionally, one of the essential components for the initiation of protein synthesis. Stabilizes the binding of IF-2 and IF-3 on the 30S subunit to which N-formylmethionyl-tRNA(fMet) subsequently binds. Helps modulate mRNA selection, yielding the 30S pre-initiation complex (PIC). Upon addition of the 50S ribosomal subunit IF-1, IF-2 and IF-3 are released leaving the mature 70S translation initiation complex. The sequence is that of Translation initiation factor IF-1, chloroplastic from Physcomitrium patens (Spreading-leaved earth moss).